The chain runs to 129 residues: uncharacterized protein (129 aa).

K121 participates in a covalent cross-link: Isoglutamyl lysine isopeptide (Lys-Gln) (interchain with Q-Cter in protein Pup).

This is an uncharacterized protein from Mycolicibacterium smegmatis (strain ATCC 700084 / mc(2)155) (Mycobacterium smegmatis).